The primary structure comprises 146 residues: uncharacterized protein (146 aa).

The protein to E.coli YmfS.

This is an uncharacterized protein from Escherichia coli (strain K12).